The following is a 226-amino-acid chain: Protein BASIC PENTACYSTEINE7 (226 aa).

Residues 42–116 (IDLSQEPPAE…PSIPETKREK (75 aa)) form a disordered region. The span at 66-76 (RDSRNDTETVK) shows a compositional bias: basic and acidic residues. Residues 88–105 (LKPKPQRKKRSVSNKSKK) show a composition bias toward basic residues.

This sequence belongs to the BBR/BPC family. As to expression, expressed in seedlings, leaves and pistils. Detected in anthers, in pollen grains, in young rosette, in leaf vasculature, in the lateral and primary roots, in embryo sac, and in the whole ovule.

Its subcellular location is the nucleus. Transcriptional regulator that specifically binds to GA-rich elements (GAGA-repeats) present in regulatory sequences of genes involved in developmental processes. In Arabidopsis thaliana (Mouse-ear cress), this protein is Protein BASIC PENTACYSTEINE7 (BPC7).